The following is a 246-amino-acid chain: Envelope glycoprotein gp95 (246 aa).

At 1–192 the chain is on the extracellular side; that stretch reads IPSRPVGGPC…EWAVHLLKGL (192 aa). Asn31 carries an N-linked (GlcNAc...) asparagine; by host glycan. A disulfide bridge links Cys50 with Cys86. Positions 58 to 78 are fusion peptide; sequence GPTARIFASILAPGVAAAQAL. Residues 75–125 adopt a coiled-coil conformation; the sequence is AQALREIERLACWSVKQANLTTSLLGDLLDDVTSIRHAVLQNRAAIDFLLL. N-linked (GlcNAc...) asparagine; by host glycosylation is present at Asn93. An immunosuppression region spans residues 114-130; that stretch reads LQNRAAIDFLLLAHGHG. An intrachain disulfide couples Cys131 to Cys138. Asn141 carries N-linked (GlcNAc...) asparagine; by host glycosylation. Residues 143-173 adopt a coiled-coil conformation; that stretch reads SDQSESIQKKFQLMKEHVNKIGVDSDLIGSW. Residues 193-213 traverse the membrane as a helical segment; sequence LLGLVVILLLVVCLPCLLQML. Residues Cys205 and Cys208 are each lipidated (S-palmitoyl cysteine; by host). Residues 214 to 246 lie on the Cytoplasmic side of the membrane; that stretch reads CGNRRKMINNSISYHTEYKKLQKACGQPESRIV.

Belongs to the Alpharetroviruses envelope glycoprotein family. As to quaternary structure, heterodimer with the transmembrane protein. The mature envelope protein (Env) consists of a trimer of SU-TM heterodimers attached by a labile interchain disulfide bond. Interacts with the host cell entry receptor TVA isoforms pg900 and pg800; this interaction allows the viral attachment. In terms of assembly, heterodimer with the surface protein. The mature envelope protein (Env) consists of a trimer of SU-TM heterodimers attached by a labile interchain disulfide bond. Specific enzymatic cleavages in vivo yield mature proteins. Envelope glycoproteins are synthesized as an inactive precursor that is N-glycosylated and processed likely by host cell furin or by a furin-like protease in the Golgi to yield the mature SU and TM proteins. The cleavage site between SU and TM requires the minimal sequence [KR]-X-[KR]-R. In terms of processing, the transmembrane protein is palmitoylated. Palmitoylation is necessary for glycoprotein function and infectivity.

It is found in the virion membrane. Its subcellular location is the host cell membrane. Functionally, the surface protein (SU) attaches the virus to the host cell entry receptor TVA. This interaction triggers the refolding of the transmembrane protein (TM) thereby unmasking its fusion peptide and the formation of a reactive thiolate to activate its fusogenic potential. Fusion occurs at the host cell plasma membrane. In terms of biological role, the transmembrane protein (TM) acts as a class I viral fusion protein. Under the current model, the protein has at least 3 conformational states: pre-fusion native state, pre-hairpin intermediate state, and post-fusion hairpin state. During viral and target cell membrane fusion, the coiled coil regions (heptad repeats) assume a trimer-of-hairpins structure, positioning the fusion peptide in close proximity to the C-terminal region of the ectodomain. The formation of this structure appears to drive apposition and subsequent fusion of viral and target cell membranes. Membranes fusion leads to delivery of the nucleocapsid into the cytoplasm. This is Envelope glycoprotein gp95 (env) from Rous sarcoma virus subgroup A (strain Schmidt-Ruppin) (RSV-SR-A).